The chain runs to 376 residues: N-acetyldiaminopimelate deacetylase (376 aa).

D69 is an active-site residue. Residue E128 is the Proton acceptor of the active site.

The protein belongs to the peptidase M20A family. N-acetyldiaminopimelate deacetylase subfamily.

The enzyme catalyses N-acetyl-(2S,6S)-2,6-diaminopimelate + H2O = (2S,6S)-2,6-diaminopimelate + acetate. Its pathway is amino-acid biosynthesis; L-lysine biosynthesis via DAP pathway; LL-2,6-diaminopimelate from (S)-tetrahydrodipicolinate (acetylase route): step 3/3. Catalyzes the conversion of N-acetyl-diaminopimelate to diaminopimelate and acetate. In Bacillus cereus (strain ATCC 14579 / DSM 31 / CCUG 7414 / JCM 2152 / NBRC 15305 / NCIMB 9373 / NCTC 2599 / NRRL B-3711), this protein is N-acetyldiaminopimelate deacetylase.